The following is a 252-amino-acid chain: Hydroxyacylglutathione hydrolase (252 aa).

Residues histidine 54, histidine 56, aspartate 58, histidine 59, histidine 111, aspartate 128, and histidine 166 each coordinate Zn(2+).

Belongs to the metallo-beta-lactamase superfamily. Glyoxalase II family. As to quaternary structure, monomer. Zn(2+) is required as a cofactor.

The enzyme catalyses an S-(2-hydroxyacyl)glutathione + H2O = a 2-hydroxy carboxylate + glutathione + H(+). The protein operates within secondary metabolite metabolism; methylglyoxal degradation; (R)-lactate from methylglyoxal: step 2/2. Thiolesterase that catalyzes the hydrolysis of S-D-lactoyl-glutathione to form glutathione and D-lactic acid. The chain is Hydroxyacylglutathione hydrolase from Vibrio parahaemolyticus serotype O3:K6 (strain RIMD 2210633).